Here is a 167-residue protein sequence, read N- to C-terminus: Large ribosomal subunit protein uL10 (167 aa).

Belongs to the universal ribosomal protein uL10 family. Part of the ribosomal stalk of the 50S ribosomal subunit. The N-terminus interacts with L11 and the large rRNA to form the base of the stalk. The C-terminus forms an elongated spine to which L12 dimers bind in a sequential fashion forming a multimeric L10(L12)X complex.

In terms of biological role, forms part of the ribosomal stalk, playing a central role in the interaction of the ribosome with GTP-bound translation factors. The chain is Large ribosomal subunit protein uL10 from Ligilactobacillus salivarius (strain UCC118) (Lactobacillus salivarius).